Consider the following 308-residue polypeptide: Shikimate kinase 1, chloroplastic (308 aa).

The transit peptide at 1–62 directs the protein to the chloroplast; sequence MEAGVGLALQ…RGSKPVAPLR (62 aa). 103-110 contributes to the ATP binding site; that stretch reads GMMGSGKS. Serine 110 lines the Mg(2+) pocket. The substrate site is built by aspartate 128, arginine 153, and glycine 175. Arginine 214 contacts ATP.

This sequence belongs to the shikimate kinase family. Mg(2+) is required as a cofactor. In terms of tissue distribution, expressed in panicles.

It localises to the plastid. Its subcellular location is the chloroplast. The enzyme catalyses shikimate + ATP = 3-phosphoshikimate + ADP + H(+). The protein operates within metabolic intermediate biosynthesis; chorismate biosynthesis; chorismate from D-erythrose 4-phosphate and phosphoenolpyruvate: step 5/7. Functionally, catalyzes the specific phosphorylation of the 3-hydroxyl group of shikimic acid using ATP as a cosubstrate. The protein is Shikimate kinase 1, chloroplastic (SK1) of Oryza sativa subsp. japonica (Rice).